The following is a 205-amino-acid chain: Glycerol-3-phosphate acyltransferase (205 aa).

6 consecutive transmembrane segments (helical) span residues 5-25, 54-74, 87-107, 117-137, 138-158, and 162-182; these read LALG…GYLA, GPAA…VWLA, IVLG…WLAF, VGLL…VWGV, CFAV…ATPL, and LWRA…YIVW.

Belongs to the PlsY family. In terms of assembly, probably interacts with PlsX.

The protein localises to the cell inner membrane. It carries out the reaction an acyl phosphate + sn-glycerol 3-phosphate = a 1-acyl-sn-glycero-3-phosphate + phosphate. Its pathway is lipid metabolism; phospholipid metabolism. Its function is as follows. Catalyzes the transfer of an acyl group from acyl-phosphate (acyl-PO(4)) to glycerol-3-phosphate (G3P) to form lysophosphatidic acid (LPA). This enzyme utilizes acyl-phosphate as fatty acyl donor, but not acyl-CoA or acyl-ACP. The sequence is that of Glycerol-3-phosphate acyltransferase from Gloeobacter violaceus (strain ATCC 29082 / PCC 7421).